Reading from the N-terminus, the 483-residue chain is GTPase Der (483 aa).

EngA-type G domains lie at 3–167 (FTLA…GEER) and 212–387 (LRIA…EIWN). GTP-binding positions include 9–16 (GRPNVGKS), 56–60 (DTAGL), 119–122 (NKAE), 218–225 (GRPNAGKS), 265–269 (DTAGM), and 330–333 (NKWD). The region spanning 388-472 (RRISTGRLNR…PIRLSLRTSD (85 aa)) is the KH-like domain.

It belongs to the TRAFAC class TrmE-Era-EngA-EngB-Septin-like GTPase superfamily. EngA (Der) GTPase family. In terms of assembly, associates with the 50S ribosomal subunit.

GTPase that plays an essential role in the late steps of ribosome biogenesis. The protein is GTPase Der of Brucella suis (strain ATCC 23445 / NCTC 10510).